We begin with the raw amino-acid sequence, 301 residues long: Probable alpha-L-glutamate ligase (301 aa).

Residues 104–287 (LQLLSRRGIG…VAGMIIEHLE (184 aa)) enclose the ATP-grasp domain. Residues lysine 141, 178-179 (EY), aspartate 187, and 211-213 (RSN) contribute to the ATP site. Residues aspartate 248, glutamate 260, and asparagine 262 each contribute to the Mg(2+) site. The Mn(2+) site is built by aspartate 248, glutamate 260, and asparagine 262.

Belongs to the RimK family. Mg(2+) serves as cofactor. Requires Mn(2+) as cofactor.

The chain is Probable alpha-L-glutamate ligase from Pseudomonas entomophila (strain L48).